The sequence spans 341 residues: HTH-type transcriptional repressor PurR (341 aa).

One can recognise an HTH lacI-type domain in the interval 2–56; sequence ATIKDVAKRANVSTTTVSHVINKTRFVAEETRNAVWAAIKELHYSPSAVARSLKV. Positions 4–23 form a DNA-binding region, H-T-H motif; it reads IKDVAKRANVSTTTVSHVIN. A DNA-binding region spans residues 48–56; that stretch reads SAVARSLKV. Hypoxanthine contacts are provided by Y73, R190, T192, F221, and D275.

Homodimer.

Its pathway is purine metabolism; purine nucleotide biosynthesis [regulation]. In terms of biological role, is the main repressor of the genes involved in the de novo synthesis of purine nucleotides, regulating purB, purC, purEK, purF, purHD, purL, purMN and guaBA expression. PurR is allosterically activated to bind its cognate DNA by binding the purine corepressors, hypoxanthine or guanine, thereby effecting transcription repression. This Escherichia coli (strain UTI89 / UPEC) protein is HTH-type transcriptional repressor PurR.